The primary structure comprises 91 residues: Alpha-defensin-related sequence 10 (91 aa).

The signal sequence occupies residues 1 to 19 (MKKLVLLSAFVLLAFQVQA). Positions 20 to 65 (DSIQNTDEETKTEEQPGEENQAMSVSFGDPEGSALQDAAVGMARPC) are excised as a propeptide. The segment at 21-52 (SIQNTDEETKTEEQPGEENQAMSVSFGDPEGS) is disordered. Repeat copies occupy residues 65–67 (CPP), 68–70 (CPS), 71–73 (CPS), 74–76 (CPW), 77–79 (CPM), 80–82 (CPR), and 83–85 (CPS). Positions 65-85 (CPPCPSCPSCPWCPMCPRCPS) are 7 X 3 AA tandem repeats of C-P-X.

Belongs to the alpha-defensin family. As to expression, paneth cells of the small bowel.

The protein resides in the secreted. Its function is as follows. Apparent precursor of a secreted, cationic, proline- and cysteine-rich peptide that contains Cys-Pro-Xaa repeats. Unlike cryptdin, the proposed mature peptide region lacks the structural motif characteristic of defensins. It may have microbicidal activities. In Mus musculus (Mouse), this protein is Alpha-defensin-related sequence 10 (Defa-rs10).